The sequence spans 302 residues: tRNA-cytidine(32) 2-sulfurtransferase (302 aa).

Positions 45-50 (SGGKDS) match the PP-loop motif motif. [4Fe-4S] cluster-binding residues include Cys-120, Cys-123, and Cys-211.

This sequence belongs to the TtcA family. Homodimer. It depends on Mg(2+) as a cofactor. [4Fe-4S] cluster is required as a cofactor.

Its subcellular location is the cytoplasm. It catalyses the reaction cytidine(32) in tRNA + S-sulfanyl-L-cysteinyl-[cysteine desulfurase] + AH2 + ATP = 2-thiocytidine(32) in tRNA + L-cysteinyl-[cysteine desulfurase] + A + AMP + diphosphate + H(+). It functions in the pathway tRNA modification. Functionally, catalyzes the ATP-dependent 2-thiolation of cytidine in position 32 of tRNA, to form 2-thiocytidine (s(2)C32). The sulfur atoms are provided by the cysteine/cysteine desulfurase (IscS) system. This chain is tRNA-cytidine(32) 2-sulfurtransferase, found in Cellvibrio japonicus (strain Ueda107) (Pseudomonas fluorescens subsp. cellulosa).